Consider the following 564-residue polypeptide: Potassium-transporting ATPase potassium-binding subunit (564 aa).

Helical transmembrane passes span 4–24, 67–87, 135–155, 179–199, 258–278, 286–306, 382–402, 420–440, 487–507, and 533–553; these read YDFA…PWLG, TLAL…VLLL, LGLT…LVVL, LYGL…QGVP, FEVA…GHYV, AILA…LWSE, AGLY…GLMI, LLVA…AIAA, LMIG…ILAL, and GLLL…TLAL.

It belongs to the KdpA family. The system is composed of three essential subunits: KdpA, KdpB and KdpC.

The protein resides in the cell inner membrane. Functionally, part of the high-affinity ATP-driven potassium transport (or Kdp) system, which catalyzes the hydrolysis of ATP coupled with the electrogenic transport of potassium into the cytoplasm. This subunit binds the periplasmic potassium ions and delivers the ions to the membrane domain of KdpB through an intramembrane tunnel. This Pseudomonas putida (strain ATCC 47054 / DSM 6125 / CFBP 8728 / NCIMB 11950 / KT2440) protein is Potassium-transporting ATPase potassium-binding subunit.